The chain runs to 279 residues: MLPLLRCVPRALGAAATGLRASIPAPPLRHLLQPAPRPCLRPFGLLSVRAGSARRSGLLQPPVPCACGCGALHTEGDKAFVEFLTDEIKEEKKIQKHKSLPKMSGDWELEVNGTEAKLLRKVAGEKITVTFNINNSIPPTFDGEEEPSQGQKAEEQEPELTSTPNFVVEVTKTDGKKTLVLDCHYPEDEIGHEDEAESDIFSIKEVSFQTTGDSEWRDTNYTLNTDSLDWALYDHLMDFLADRGVDNTFADELVELSTALEHQEYITFLEDLKSFVKSQ.

The N-terminal 71 residues, 1 to 71 (MLPLLRCVPR…PVPCACGCGA (71 aa)), are a transit peptide targeting the mitochondrion. A C1q binding region spans residues 74-91 (TEGDKAFVEFLTDEIKEE). N6-acetyllysine occurs at positions 89 and 92. The interval 134–162 (NNSIPPTFDGEEEPSQGQKAEEQEPELTS) is disordered. The interval 166 to 210 (FVVEVTKTDGKKTLVLDCHYPEDEIGHEDEAESDIFSIKEVSFQT) is interaction with MAVS. Residue Y185 is modified to Phosphotyrosine. A phosphoserine mark is found at S198 and S202. The residue at position 211 (T211) is a Phosphothreonine.

This sequence belongs to the MAM33 family. In terms of assembly, homotrimer; three monomers form a donut-shaped structure with an unusually asymmetric charge distribution on the surface. Interacts with CDK13, HRK, VTN, NFYB, ADRA1B, FOXC1, DDX21, DDX50, NCL, SRSF1 and SRSF9. Interacts with CD93; the association may represent a cell surface C1q receptor. Interacts with KRT1; the association represents a cell surface kininogen receptor. Interacts with CD209; the interaction is indicative for a C1q:C1QBP:CD209 signaling complex. Interacts with FBL and RRP1; the respective interactions with C1QBP are competitive. Probably associates with the mitoribosome. Interacts with MAVS; the interaction occurs upon viral transfection. Interacts with PPIF. Interacts with U2AF1L4. Interacts with PLEKHN1. Interacts with VGF-derived peptide TLQP-21. Interacts with MRE11 and RAD50; forming the MRC (MRE11-RAD50-C1QBP) complex that inhibits the activity of MRE11. As to expression, ubiquitous.

The protein localises to the mitochondrion matrix. Its subcellular location is the nucleus. It localises to the cell membrane. The protein resides in the secreted. It is found in the cytoplasm. The protein localises to the nucleolus. In terms of biological role, multifunctional and multicompartmental protein involved in inflammation and infection processes, ribosome biogenesis, protein synthesis in mitochondria, regulation of apoptosis, transcriptional regulation and pre-mRNA splicing. At the cell surface is thought to act as an endothelial receptor for plasma proteins of the complement and kallikrein-kinin cascades. Putative receptor for C1q; specifically binds to the globular 'heads' of C1q thus inhibiting C1; may perform the receptor function through a complex with C1qR/CD93. In complex with cytokeratin-1/KRT1 is a high affinity receptor for kininogen-1/HMWK. Can also bind other plasma proteins, such as coagulation factor XII leading to its autoactivation. May function to bind initially fluid kininogen-1 to the cell membrane. The secreted form may enhance both extrinsic and intrinsic coagulation pathways. It is postulated that the cell surface form requires docking with transmembrane proteins for downstream signaling which might be specific for a cell-type or response. By acting as C1q receptor is involved in chemotaxis of immature dendritic cells and neutrophils and is proposed to signal through CD209/DC-SIGN on immature dendritic cells, through integrin alpha-4/beta-1 during trophoblast invasion of the decidua, and through integrin beta-1 during endothelial cell adhesion and spreading. Signaling involved in inhibition of innate immune response is implicating the PI3K-AKT/PKB pathway. Required for protein synthesis in mitochondria. In mitochondrial translation may be involved in formation of functional 55S mitoribosomes; the function seems to involve its RNA-binding activity. Acts as a RNA modification reader, which specifically recognizes and binds mitochondrial RNAs modified by C5-methylcytosine (m5C) in response to stress, and promotes recruitment of the mitochondrial degradosome complex, leading to their degradation. May be involved in the nucleolar ribosome maturation process; the function may involve the exchange of FBL for RRP1 in the association with pre-ribosome particles. Involved in regulation of RNA splicing by inhibiting the RNA-binding capacity of SRSF1 and its phosphorylation. Is required for the nuclear translocation of splicing factor U2AF1L4. Involved in regulation of CDKN2A- and HRK-mediated apoptosis. Stabilizes mitochondrial CDKN2A isoform smARF. May be involved in regulation of FOXC1 transcriptional activity and NFY/CCAAT-binding factor complex-mediated transcription. May play a role in antibacterial defense as it can bind to cell surface hyaluronan and inhibit Streptococcus pneumoniae hyaluronate lyase. May be involved in modulation of the immune response; ligation by HCV core protein is resulting in suppression of interleukin-12 production in monocyte-derived dendritic cells. Involved in regulation of antiviral response by inhibiting RIGI- and IFIH1-mediated signaling pathways probably involving its association with MAVS after viral infection. Acts as a regulator of DNA repair via homologous recombination by inhibiting the activity of MRE11: interacts with unphosphorylated MRE11 and RAD50 in absence of DNA damage, preventing formation and activity of the MRN complex. Following DNA damage, dissociates from phosphorylated MRE11, allowing formation of the MRN complex. This chain is Complement component 1 Q subcomponent-binding protein, mitochondrial (C1qbp), found in Rattus norvegicus (Rat).